Reading from the N-terminus, the 120-residue chain is Protein p14.5 (120 aa).

2 disordered regions span residues 1–27 (MADF…LEYD) and 80–120 (REFT…HKSK). Ala2 is modified (N-acetylalanine; by host). Positions 103–120 (KPKKKKHLFPKLSSHKSK) are enriched in basic residues.

It belongs to the asfivirus structural protein p14.5 family. Interacts with the major capsid protein. Interacts with host IRF3; this interaction interferes with the recruitment of IRF3 to TBK1. Post-translationally, acetylated.

The protein resides in the virion. Structural protein required for transport of intracellular particles from the assembly sites to the plasma membrane. Binds to both ssDNA and dsDNA. Suppressed the activation of the cGAS/STING pathway by interfering with the recruitment of IRF3 to TBK1, which in turn suppresses IRF3 phosphorylation, decreasing interferon production. This Ornithodoros (relapsing fever ticks) protein is Protein p14.5.